Reading from the N-terminus, the 864-residue chain is DNA mismatch repair protein MutS (864 aa).

An ATP-binding site is contributed by 613-620; the sequence is GPNMGGKS.

Belongs to the DNA mismatch repair MutS family.

Functionally, this protein is involved in the repair of mismatches in DNA. It is possible that it carries out the mismatch recognition step. This protein has a weak ATPase activity. The polypeptide is DNA mismatch repair protein MutS (Actinobacillus pleuropneumoniae serotype 3 (strain JL03)).